Reading from the N-terminus, the 214-residue chain is Guanylate kinase (214 aa).

Positions 6 to 192 constitute a Guanylate kinase-like domain; the sequence is GTLYIISAPS…ALEDLKAIFR (187 aa). An ATP-binding site is contributed by 13–20; that stretch reads APSGAGKT.

It belongs to the guanylate kinase family.

Its subcellular location is the cytoplasm. The enzyme catalyses GMP + ATP = GDP + ADP. Its function is as follows. Essential for recycling GMP and indirectly, cGMP. In Pseudomonas savastanoi pv. phaseolicola (strain 1448A / Race 6) (Pseudomonas syringae pv. phaseolicola (strain 1448A / Race 6)), this protein is Guanylate kinase.